The sequence spans 403 residues: Lissencephaly-1 homolog 1 (403 aa).

In terms of domain architecture, LisH spans 7 to 38 (QRDELNQAIHQYLLISYQQSAQLFKTEAAVKD). A coiled-coil region spans residues 51-87 (NSIVRLSKRVITLEQQVEQLNEQLAQAQAGKIQFNKS). WD repeat units follow at residues 103–142 (GHRAGVNCVAFHPQYQILGSASDDGSIKLWDYESGHFEKT), 145–184 (GHTSNVNCLAFDPTGKYICSASSDLSIKIWELKNHTCVKT), 187–226 (GHEHSVSTVQFSDHGDFILSASRDKNIKLWEVATGFCKKT), 229–270 (EHQE…HQLS), 271–327 (GHEH…NLFT), 330–369 (GHDNWVNGVSFHPDGVHMLSVSDDKTIRVWNLKEQKQKKK), and 373–403 (AHDKFILKCEINKFIFATCSVDQTIKLWLLS).

Belongs to the WD repeat LIS1/nudF family.

The protein resides in the cytoplasm. It localises to the cytoskeleton. Its subcellular location is the microtubule organizing center. It is found in the centrosome. Functionally, positively regulates the activity of the minus-end directed microtubule motor protein dynein. May enhance dynein-mediated microtubule sliding by targeting dynein to the microtubule plus end. Required for several dynein- and microtubule-dependent processes. This chain is Lissencephaly-1 homolog 1, found in Paramecium tetraurelia.